We begin with the raw amino-acid sequence, 428 residues long: Glutamate-1-semialdehyde 2,1-aminomutase (428 aa).

K266 carries the post-translational modification N6-(pyridoxal phosphate)lysine.

It belongs to the class-III pyridoxal-phosphate-dependent aminotransferase family. HemL subfamily. In terms of assembly, homodimer. Pyridoxal 5'-phosphate serves as cofactor.

Its subcellular location is the cytoplasm. It carries out the reaction (S)-4-amino-5-oxopentanoate = 5-aminolevulinate. It participates in porphyrin-containing compound metabolism; protoporphyrin-IX biosynthesis; 5-aminolevulinate from L-glutamyl-tRNA(Glu): step 2/2. This Herminiimonas arsenicoxydans protein is Glutamate-1-semialdehyde 2,1-aminomutase.